The following is a 492-amino-acid chain: Glycerol kinase (492 aa).

Thr-11 lines the ADP pocket. Residues Thr-11 and Thr-12 each coordinate ATP. Position 11 (Thr-11) interacts with sn-glycerol 3-phosphate. ADP is bound at residue Lys-15. Sn-glycerol 3-phosphate-binding residues include Arg-79, Glu-80, Tyr-129, and Asp-238. Glycerol contacts are provided by Arg-79, Glu-80, Tyr-129, Asp-238, and Gln-239. Thr-260, Gly-302, Gly-403, and Asn-407 together coordinate ADP. ATP-binding residues include Thr-260, Gly-302, and Gly-403.

It belongs to the FGGY kinase family.

It catalyses the reaction glycerol + ATP = sn-glycerol 3-phosphate + ADP + H(+). The protein operates within polyol metabolism; glycerol degradation via glycerol kinase pathway; sn-glycerol 3-phosphate from glycerol: step 1/1. Inhibited by fructose 1,6-bisphosphate (FBP). Functionally, key enzyme in the regulation of glycerol uptake and metabolism. Catalyzes the phosphorylation of glycerol to yield sn-glycerol 3-phosphate. This is Glycerol kinase from Aquifex aeolicus (strain VF5).